Consider the following 630-residue polypeptide: tRNA uridine 5-carboxymethylaminomethyl modification enzyme MnmG (630 aa).

13–18 contributes to the FAD binding site; that stretch reads GGGHAG. 273–287 serves as a coordination point for NAD(+); the sequence is GPRYCPSIEDKIHRF.

Belongs to the MnmG family. Homodimer. Heterotetramer of two MnmE and two MnmG subunits. FAD is required as a cofactor.

It localises to the cytoplasm. NAD-binding protein involved in the addition of a carboxymethylaminomethyl (cmnm) group at the wobble position (U34) of certain tRNAs, forming tRNA-cmnm(5)s(2)U34. In Pseudomonas putida (strain W619), this protein is tRNA uridine 5-carboxymethylaminomethyl modification enzyme MnmG.